Here is a 77-residue protein sequence, read N- to C-terminus: Defensin-B6 (77 aa).

Residues 1–20 form the signal peptide; that stretch reads MKTLFFLSVFIFLLLHLSPG. 3 disulfides stabilise this stretch: C43-C70, C50-C64, and C54-C71.

This sequence belongs to the beta-defensin family. Lowly expressed in spleen, kidney and lung.

The protein resides in the secreted. Its function is as follows. Has antimicrobial activity. The sequence is that of Defensin-B6 from Ornithorhynchus anatinus (Duckbill platypus).